Consider the following 216-residue polypeptide: Adenylate kinase (216 aa).

Position 10–15 (10–15) interacts with ATP; it reads GAGKGT. Residues 30-59 form an NMP region; the sequence is STGDIFRKNISENTPLGIEAKSYMDNGQLV. AMP-binding positions include threonine 31, arginine 36, 57 to 59, 85 to 88, and glutamine 92; these read QLV and GFPR. Residues 126–163 are LID; the sequence is GRRVCPSCGASYHIKFNPPTNDGKCDLCGSDVIQRKDD. Position 127 (arginine 127) interacts with ATP. Residues cysteine 130 and cysteine 133 each contribute to the Zn(2+) site. Position 136 to 137 (136 to 137) interacts with ATP; the sequence is SY. 2 residues coordinate Zn(2+): cysteine 150 and cysteine 153. Positions 160 and 171 each coordinate AMP. Position 199 (glutamine 199) interacts with ATP.

The protein belongs to the adenylate kinase family. In terms of assembly, monomer.

The protein resides in the cytoplasm. The enzyme catalyses AMP + ATP = 2 ADP. It participates in purine metabolism; AMP biosynthesis via salvage pathway; AMP from ADP: step 1/1. Its function is as follows. Catalyzes the reversible transfer of the terminal phosphate group between ATP and AMP. Plays an important role in cellular energy homeostasis and in adenine nucleotide metabolism. The polypeptide is Adenylate kinase (Clostridium perfringens (strain ATCC 13124 / DSM 756 / JCM 1290 / NCIMB 6125 / NCTC 8237 / Type A)).